The chain runs to 240 residues: Cysteine-rich venom protein (240 aa).

The N-terminal stretch at 1–19 (MIAFIVLPILAAVLHQSSG) is a signal peptide. The region spanning 39-166 (DLHNSLRRSV…KYRYFYVCQY (128 aa)) is the SCP domain. Cystine bridges form between C75–C153, C92–C167, C148–C164, C186–C193, C189–C198, C202–C235, C211–C229, and C220–C233. A ShKT domain is found at 202–235 (CTQENTYSNCNSLVQQSSCQDNNMKTKCPASCFC).

This sequence belongs to the CRISP family. In terms of tissue distribution, expressed by the venom gland.

Its subcellular location is the secreted. Its function is as follows. May block ryanodine receptors (RYR). This Protobothrops mucrosquamatus (Taiwan habu) protein is Cysteine-rich venom protein.